The chain runs to 213 residues: 3-hexulose-6-phosphate synthase 2 (213 aa).

The protein belongs to the HPS/KGPDC family. HPS subfamily.

It carries out the reaction D-ribulose 5-phosphate + formaldehyde = D-arabino-hex-3-ulose 6-phosphate. It functions in the pathway one-carbon metabolism; formaldehyde assimilation via RuMP pathway; D-fructose 6-phosphate from D-ribulose 5-phosphate and formaldehyde: step 1/2. In terms of biological role, catalyzes the condensation of ribulose 5-phosphate with formaldehyde to form 3-hexulose 6-phosphate. The chain is 3-hexulose-6-phosphate synthase 2 from Staphylococcus saprophyticus subsp. saprophyticus (strain ATCC 15305 / DSM 20229 / NCIMB 8711 / NCTC 7292 / S-41).